Here is a 1588-residue protein sequence, read N- to C-terminus: Multicopy suppressor of chk1 protein 1 (1588 aa).

The interval 38-60 (HAKPSTQQQQQQQNISNETTSTG) is disordered. Residues 51–60 (NISNETTSTG) show a composition bias toward polar residues. The JmjN domain occupies 82-124 (NVRVTPKKEEFSRGLDFISDLYDQTARKSGAVRVIPPDNWKCP). The PHD-type 1 zinc finger occupies 298 to 345 (KCKLCAQEGSSLVTCCICQSNYHYACVEAPFAPFSDIHYWTCNSCIPS). The span at 385–395 (PLTLPSNTKTP) shows a compositional bias: polar residues. The tract at residues 385 to 412 (PLTLPSNTKTPPASARQSSRRTRSTSGK) is disordered. Positions 475 to 645 (FPTSRQNAYY…DMHAENSFNM (171 aa)) constitute a JmjC domain. The segment at 848-872 (EKRKPKRGSATHSHLESPSEEVEDL) is disordered. The PHD-type 2 zinc-finger motif lies at 1171 to 1220 (FHYCFCRQPEAGMMIECELCHEWYHAKCMKMSKKKLRADEKFICPICDYR). Residues 1319-1341 (APQPPPFIGESRSNRKPRPTKRQ) form a disordered region. A PHD-type 3 zinc finger spans residues 1454–1505 (SVICLCRQPFAISDGTVQCHNCLEWFHYECVGLSSDIVSTLSNYACPDCCSK).

The protein localises to the nucleus. Functionally, has a role in regulating chromatin structure via global deacetylation of histone H3. This function is associated with the activity of a histone deacetylase. The sequence is that of Multicopy suppressor of chk1 protein 1 (msc1) from Schizosaccharomyces pombe (strain 972 / ATCC 24843) (Fission yeast).